Consider the following 255-residue polypeptide: Small ribosomal subunit protein eS1A (255 aa).

Residues 1 to 18 (MAVGKNKRLSKGKKGQKK) are compositionally biased toward basic residues. The interval 1–20 (MAVGKNKRLSKGKKGQKKRV) is disordered. Residue Ala-2 is modified to N-acetylalanine; partial. The residue at position 245 (Thr-245) is a Phosphothreonine. Lys-248 is covalently cross-linked (Glycyl lysine isopeptide (Lys-Gly) (interchain with G-Cter in ubiquitin)). Thr-254 is subject to Phosphothreonine.

The protein belongs to the eukaryotic ribosomal protein eS1 family. As to quaternary structure, component of the small ribosomal subunit. Mature ribosomes consist of a small (40S) and a large (60S) subunit. The 40S subunit contains about 33 different proteins and 1 molecule of RNA (18S). The 60S subunit contains about 49 different proteins and 3 molecules of RNA (25S, 5.8S and 5S).

It is found in the cytoplasm. The polypeptide is Small ribosomal subunit protein eS1A (Saccharomyces cerevisiae (strain RM11-1a) (Baker's yeast)).